Reading from the N-terminus, the 78-residue chain is Exodeoxyribonuclease 7 small subunit (78 aa).

It belongs to the XseB family. In terms of assembly, heterooligomer composed of large and small subunits.

It localises to the cytoplasm. It carries out the reaction Exonucleolytic cleavage in either 5'- to 3'- or 3'- to 5'-direction to yield nucleoside 5'-phosphates.. Bidirectionally degrades single-stranded DNA into large acid-insoluble oligonucleotides, which are then degraded further into small acid-soluble oligonucleotides. The chain is Exodeoxyribonuclease 7 small subunit from Finegoldia magna (strain ATCC 29328 / DSM 20472 / WAL 2508) (Peptostreptococcus magnus).